Reading from the N-terminus, the 801-residue chain is Phosphatidylinositol 4-kinase beta (801 aa).

3 disordered regions span residues 1 to 29, 101 to 121, and 250 to 304; these read MGDTAVEPAPLKPASEPAPGPPGNNGGSL, EDEMGATVTSGTAKGARRRRQ, and RKRE…EDEP. Gly2 carries the N-acetylglycine modification. The interaction with ACBD3 stretch occupies residues 2–68; the sequence is GDTAVEPAPL…VRLLHGAVAV (67 aa). The PIK helical domain occupies 29-242; sequence LLSVITEGVG…GTKLRKLILS (214 aa). Ser258 is modified (phosphoserine). Residues 259–268 are compositionally biased toward polar residues; sequence PALNTGLSPS. Residue Thr263 is modified to Phosphothreonine. Ser266, Ser275, Ser277, Ser284, Ser294, and Ser413 each carry phosphoserine. A compositionally biased stretch (low complexity) spans 278 to 294; that stretch reads DATASISLSSSLKRTAS. Thr423 is subject to Phosphothreonine. Ser496 bears the Phosphoserine mark. Phosphothreonine is present on residues Thr502 and Thr504. The 267-residue stretch at 520–786 folds into the PI3K/PI4K catalytic domain; that stretch reads EPWQEKVRRI…MVDGSMRSIT (267 aa). Positions 526 to 532 are G-loop; the sequence is VRRIREG. A catalytic loop region spans residues 653-661; that stretch reads QVKDRHNGN. The interval 672 to 696 is activation loop; the sequence is HIDFGFILSSSPRNLGFETSAFKLT.

It belongs to the PI3/PI4-kinase family. Type III PI4K subfamily. In terms of assembly, interacts with ARF1 and ARF3 in the Golgi complex, but not with ARF4, ARF5 or ARF6. Interacts with NCS1/FREQ in a calcium-independent manner. Interacts with CALN1/CABP8 and CALN2/CABP7; in a calcium-dependent manner; this interaction competes with NCS1/FREQ binding. Interacts with ACBD3. Interacts with ARMH3, YWHAB, YWHAE, YWHAG, YWHAH, YWHAQ, YWHAZ and SFN. Interacts with GGA2 (via VHS domain); the interaction is important for PI4KB location at the Golgi apparatus membrane. Interacts with ATG9A. Requires Mg(2+) as cofactor. It depends on Mn(2+) as a cofactor.

The protein resides in the endomembrane system. It is found in the mitochondrion outer membrane. The protein localises to the rough endoplasmic reticulum membrane. It localises to the golgi apparatus. Its subcellular location is the golgi apparatus membrane. It carries out the reaction a 1,2-diacyl-sn-glycero-3-phospho-(1D-myo-inositol) + ATP = a 1,2-diacyl-sn-glycero-3-phospho-(1D-myo-inositol 4-phosphate) + ADP + H(+). With respect to regulation, inhibited by wortmannin. Increased kinase activity upon interaction with NCS1/FREQ. Phosphorylates phosphatidylinositol (PI) in the first committed step in the production of the second messenger inositol-1,4,5,-trisphosphate (PIP). May regulate Golgi disintegration/reorganization during mitosis, possibly via its phosphorylation. Involved in Golgi-to-plasma membrane trafficking. May play an important role in the inner ear development. The protein is Phosphatidylinositol 4-kinase beta (PI4KB) of Sorex araneus (Eurasian common shrew).